A 249-amino-acid polypeptide reads, in one-letter code: DNA repair protein RecO (249 aa).

Belongs to the RecO family.

Its function is as follows. Involved in DNA repair and RecF pathway recombination. The chain is DNA repair protein RecO from Desulforudis audaxviator (strain MP104C).